Here is a 70-residue protein sequence, read N- to C-terminus: Chondroitin proteoglycan 9 (70 aa).

Positions 1–19 (MNFWHLLLLAVLFFVTVFG) are cleaved as a signal peptide. O-linked (Xyl...) (chondroitin sulfate) serine glycosylation is found at Ser-25 and Ser-27.

This is Chondroitin proteoglycan 9 (cpg-9) from Caenorhabditis briggsae.